Reading from the N-terminus, the 309-residue chain is Partitioning defective protein 6 (309 aa).

In terms of domain architecture, PB1 spans 14–96 (TLQVKSKFDS…PLLRLLIQRR (83 aa)). A Pseudo-CRIB domain is found at 132–149 (ISNPEDFRQVSAIIDVDI). The PDZ domain occupies 156–249 (RVRLCKHGQE…NLIITVKPAN (94 aa)). Positions 249 to 270 (NQRNTLSRGPSQQGTPNASEMS) are enriched in polar residues. Positions 249–309 (NQRNTLSRGP…DANDSDSGED (61 aa)) are disordered.

Belongs to the PAR6 family. In terms of assembly, interacts with par-3, required for its peripheral localization, and with cdc-42, required for the activation of a par-3/par-6/pkc-3 complex. Colocalized with par-3 at all stages in early embryos, at the anterior cortex of the embryo. Patchy expression observed at the periphery after completion of meiosis I and in meiosis II, which on completion of metaphase II, is restricted to the anterior 85% of embryo length; this decreases to 55% in embryos between prophase and telophase of the first mitosis. During the first cleavage, expression is detected in the advancing furrow. Along with pkc-3, is unable to associate with the apical cortex of cells that lack par-3. Transiently coexpressed and colocalized with par-3 and pkc-3, asymmetrically in the developing somatic gonad, including the spermathecal precursor cells of L4 larvae.

The protein localises to the cytoplasm. The protein resides in the cell membrane. It localises to the cell junction. It is found in the tight junction. Necessary for apicobasal and anterior-posterior asymmetries associated with cell adhesion and gastrulation during the first few cell cycles of embryogenesis. Required for localizing/ maintaining par-3 at the cell periphery. Regulates mes-1 expression and/or localization pattern during early embryogenesis. Acts together with par-3 and pkc-3 in maintaining epithelial cell polarity in the distal spermatheca. Plays a role in endosome and Golgi body positioning. This chain is Partitioning defective protein 6, found in Caenorhabditis elegans.